The sequence spans 677 residues: MTQVAKKILVTCALPYANGSIHLGHMLEHIQADVWVRYQRMRGHEVNFICADDAHGTPIMLKAQQLGITPEQMIGEMSQEHQTDFAGFNISYDNYHSTHSEENRQLSELIYSRLKENGFIKNRTISQLYDPEKGMFLPDRFVKGTCPKCKSPDQYGDNCEVCGATYSPTELIEPKSVVSGATPVMRDSEHFFFDLPSFSEMLQAWTRSGALQEQVANKMQEWFESGLQQWDISRDAPYFGFEIPNAPGKYFYVWLDAPIGYMGSFKNLCDKRGDSVSFDEYWKKDSTAELYHFIGKDIVYFHSLFWPAMLEGSNFRKPTNLFVHGYVTVNGAKMSKSRGTFIKASTWLNHFDADSLRYYYTAKLSSRIDDIDLNLEDFVQRVNADIVNKVVNLASRNAGFINKRFDGVLASELADPELYKTFTDAAEVIGEAWESREFGKAVREIMALADLANRYVDEQAPWVVAKQEGRDADLQAICSMGINLFRVLMTYLKPVLPKLTERAEAFLNTELTWDGIQQPLLGHKVNPFKALYNRIDMKQVEALVEASKEEVKATTAPVTGPLADDPIQETITFDDFAKVDLRVALIENAEFVEGSDKLLRLTLDLGGEKRNVFSGIRSAYPDPQALIGRHTIMVANLAPRKMRFGISEGMVMAAGPGGKDIFLLSPDAGAKPGHQVK.

Positions 15 to 25 (PYANGSIHLGH) match the 'HIGH' region motif. 4 residues coordinate Zn(2+): Cys-146, Cys-149, Cys-159, and Cys-162. The 'KMSKS' region motif lies at 333 to 337 (KMSKS). ATP is bound at residue Lys-336. Residues 575–677 (DFAKVDLRVA…AGAKPGHQVK (103 aa)) form the tRNA-binding domain.

It belongs to the class-I aminoacyl-tRNA synthetase family. MetG type 1 subfamily. Homodimer. Requires Zn(2+) as cofactor.

The protein localises to the cytoplasm. The catalysed reaction is tRNA(Met) + L-methionine + ATP = L-methionyl-tRNA(Met) + AMP + diphosphate. Functionally, is required not only for elongation of protein synthesis but also for the initiation of all mRNA translation through initiator tRNA(fMet) aminoacylation. The protein is Methionine--tRNA ligase of Shigella flexneri serotype 5b (strain 8401).